The chain runs to 113 residues: U11-theraphotoxin-Hhn1a (113 aa).

The first 21 residues, 1-21 (MNTVRATFLLVFVLAVSLGQA), serve as a signal peptide directing secretion. Positions 22 to 74 (DKDENRMEMQEKTEQGKSYLDFAENLLLQKLEELEAKLLEEDSEESRNSRQKR) are excised as a propeptide. Positions 60 to 69 (LEEDSEESRN) are enriched in basic and acidic residues. Positions 60 to 82 (LEEDSEESRNSRQKRCIGEGVPC) are disordered. Intrachain disulfides connect Cys-75/Cys-90, Cys-82/Cys-95, and Cys-89/Cys-110.

Belongs to the neurotoxin 14 (magi-1) family. 01 (HNTX-16) subfamily. Expressed by the venom gland.

The protein resides in the secreted. Its function is as follows. Probable ion channel inhibitor. The chain is U11-theraphotoxin-Hhn1a from Cyriopagopus hainanus (Chinese bird spider).